The sequence spans 276 residues: Ammonia monooxygenase alpha subunit (276 aa).

Transmembrane regions (helical) follow at residues 29–49, 66–86, 96–116, 123–143, and 150–170; these read VYFPILIILLVGTYHMHFMLL, PVVTPIVGITYCSAIMYYLWV, LCVVCLLIGEWLTRYWGFYWW, FVTPGIMLPGALMLDFTLYLT, and ALVGGGFFGLLFYPGNWPIFG. The Cu(+) site is built by Asp187, His191, and His204. The chain crosses the membrane as a helical span at residues 219–239; it reads VIAAFFSAFVSMLMFTVWWYL.

In terms of assembly, the soluble ammonia monooxygenase is a nonamer composed of three alpha subunits (AmoA), three beta subunits (AmoB) and three gamma subunits (Cytochrome c1 PetC). Requires Cu(+) as cofactor.

The protein localises to the cell membrane. It is found in the cytoplasm. It carries out the reaction AH2 + NH4(+) + O2 = hydroxylamine + A + H2O + H(+). With respect to regulation, in vitro, inhibited by acetylene. In fact, acetylene is oxidized to ketene which binds irreversibly to His-191 of ammonia monooxygenase alpha subunit (AmoA). Its function is as follows. Part of the ammonia monooxygenase complex, which catalyzes the oxidation of ammonia to hydroxylamine, the first reaction in the process of ammonia oxidation to nitrite. This is Ammonia monooxygenase alpha subunit from Nitrosomonas europaea (strain ATCC 19718 / CIP 103999 / KCTC 2705 / NBRC 14298).